A 505-amino-acid polypeptide reads, in one-letter code: Oxidative stress-induced growth inhibitor 2 (505 aa).

This sequence belongs to the OKL38 family. It depends on NADPH as a cofactor. In terms of tissue distribution, ubiquitous. Expressed at higher levels in testis and ovary.

It is found in the midbody. Its function is as follows. Monooxygenase catalytic activity. May be involved in meiosis or the maturation of germ cells. The protein is Oxidative stress-induced growth inhibitor 2 of Homo sapiens (Human).